We begin with the raw amino-acid sequence, 127 residues long: Photosystem II extrinsic protein U (127 aa).

A signal peptide spans 1–31 (MSRLFRRLSTLLLCSLLVLGVWLTQPLSVQA).

Belongs to the PsbU family. In terms of assembly, PSII is composed of 1 copy each of membrane proteins PsbA, PsbB, PsbC, PsbD, PsbE, PsbF, PsbH, PsbI, PsbJ, PsbK, PsbL, PsbM, PsbT, PsbX, PsbY, PsbZ, Psb30/Ycf12, peripheral proteins PsbO, CyanoQ (PsbQ), PsbU, PsbV and a large number of cofactors. It forms dimeric complexes.

It is found in the cellular thylakoid membrane. Its function is as follows. One of the extrinsic, lumenal subunits of photosystem II (PSII). PSII is a light-driven water plastoquinone oxidoreductase, using light energy to abstract electrons from H(2)O, generating a proton gradient subsequently used for ATP formation. The extrinsic proteins stabilize the structure of photosystem II oxygen-evolving complex (OEC), the ion environment of oxygen evolution and protect the OEC against heat-induced inactivation. The polypeptide is Photosystem II extrinsic protein U (Synechococcus sp. (strain RCC307)).